A 394-amino-acid chain; its full sequence is 1-deoxy-D-xylulose 5-phosphate reductoisomerase (394 aa).

Thr12, Gly13, Ser14, Ile15, Lys39, Gln40, and Asn126 together coordinate NADPH. A 1-deoxy-D-xylulose 5-phosphate-binding site is contributed by Lys127. Residue Glu128 coordinates NADPH. Asp152 lines the Mn(2+) pocket. Residues Ser153, Glu154, Ser183, and His206 each contribute to the 1-deoxy-D-xylulose 5-phosphate site. Glu154 provides a ligand contact to Mn(2+). NADPH is bound at residue Gly212. 1-deoxy-D-xylulose 5-phosphate contacts are provided by Ser219, Asn224, Lys225, and Glu228. Residue Glu228 coordinates Mn(2+).

It belongs to the DXR family. It depends on Mg(2+) as a cofactor. The cofactor is Mn(2+).

It catalyses the reaction 2-C-methyl-D-erythritol 4-phosphate + NADP(+) = 1-deoxy-D-xylulose 5-phosphate + NADPH + H(+). It functions in the pathway isoprenoid biosynthesis; isopentenyl diphosphate biosynthesis via DXP pathway; isopentenyl diphosphate from 1-deoxy-D-xylulose 5-phosphate: step 1/6. Its function is as follows. Catalyzes the NADPH-dependent rearrangement and reduction of 1-deoxy-D-xylulose-5-phosphate (DXP) to 2-C-methyl-D-erythritol 4-phosphate (MEP). In Neisseria meningitidis serogroup B (strain ATCC BAA-335 / MC58), this protein is 1-deoxy-D-xylulose 5-phosphate reductoisomerase.